Consider the following 441-residue polypeptide: Protein disulfide isomerase-like 2-3 (441 aa).

A signal peptide spans 1 to 18; that stretch reads MRPAVAAALLLVAAAVAA. Thioredoxin domains are found at residues 19–139 and 159–276; these read SPVS…ALLR and SEKT…ANAA. Catalysis depends on nucleophile residues cysteine 59 and cysteine 62. Cysteine 59 and cysteine 62 form a disulfide bridge. The tract at residues 143–166 is disordered; it reads NGKTSAGSGGKKSGGSSEKTEPSA. Residues cysteine 195 and cysteine 198 each act as nucleophile in the active site. The cysteines at positions 195 and 198 are disulfide-linked.

It belongs to the protein disulfide isomerase family.

The protein resides in the endoplasmic reticulum lumen. The catalysed reaction is Catalyzes the rearrangement of -S-S- bonds in proteins.. Acts as a protein-folding catalyst that interacts with nascent polypeptides to catalyze the formation, isomerization, and reduction or oxidation of disulfide bonds. May play a role in storage protein biogenesis. The sequence is that of Protein disulfide isomerase-like 2-3 (PDIL2-3) from Oryza sativa subsp. japonica (Rice).